We begin with the raw amino-acid sequence, 1912 residues long: Vitellogenin-1 (1912 aa).

The signal sequence occupies residues 1 to 15 (MRGLISALVLTLVGS). Residues 24 to 663 (FGENKVYTYN…AGSLIPTMAV (640 aa)) enclose the Vitellogenin domain. Residue N163 is glycosylated (N-linked (GlcNAc...) asparagine). The interval 948-972 (DSASGETDNIRDRQSVEDVSSGNSF) is disordered. N-linked (GlcNAc...) asparagine glycosylation is present at N991. Disordered regions lie at residues 1080 to 1329 (KILD…SYDI) and 1351 to 1432 (HWHS…RERN). Low complexity-rich tracts occupy residues 1092–1124 (NSRS…NRAS) and 1150–1235 (SSSS…SSSK). The N-linked (GlcNAc...) asparagine glycan is linked to N1206. Residues 1259–1269 (EGERSVHEQKQ) show a composition bias toward basic and acidic residues. The span at 1273–1299 (SSSSSSSRASSNSRSTSSSTSSSSESS) shows a compositional bias: low complexity. The span at 1306–1316 (WKQDREAETKR) shows a compositional bias: basic and acidic residues. The segment covering 1319 to 1328 (SQFNSHSSYD) has biased composition (polar residues). A compositionally biased stretch (low complexity) spans 1357–1381 (RTSSSSSSSSSESGSSHSNSSSSDS). N1375 carries N-linked (GlcNAc...) asparagine glycosylation. The span at 1397-1409 (SHRHGEKAAHSSR) shows a compositional bias: basic residues. The VWFD domain maps to 1640–1818 (STCEVSKGDF…SWVLLEETCS (179 aa)). Cystine bridges form between C1642–C1781 and C1665–C1817. N-linked (GlcNAc...) asparagine glycosylation is found at N1662, N1698, and N1703.

Post-translationally, phosvitin, an egg yolk storage protein, is one of the most highly phosphorylated (10%) proteins in nature. Cathepsin D is responsible for intraoocytic processing of vitellogenin. In terms of processing, may contain intrachain disulfide bonds. As to expression, produced by the liver, secreted into the blood and then sequestered by receptor mediated endocytosis into growing oocytes, where it is generally cleaved, giving rise to the respective yolk components.

Functionally, precursor of the egg-yolk proteins that are sources of nutrients during early development of oviparous organisms. In terms of biological role, phosvitin is believed to be of importance in sequestering calcium, iron and other cations for the developing embryo. This chain is Vitellogenin-1 (VTG1), found in Gallus gallus (Chicken).